The chain runs to 348 residues: Probable dual-specificity RNA methyltransferase RlmN (348 aa).

Glu-90 functions as the Proton acceptor in the catalytic mechanism. In terms of domain architecture, Radical SAM core spans 96–324; that stretch reads AAERLTVCVS…ASVRHTRGLE (229 aa). Cysteines 103 and 329 form a disulfide. Positions 110, 114, and 117 each coordinate [4Fe-4S] cluster. Residues 157 to 158, Ser-187, 210 to 212, and Asn-286 contribute to the S-adenosyl-L-methionine site; these read GE and SLH. The active-site S-methylcysteine intermediate is Cys-329.

Belongs to the radical SAM superfamily. RlmN family. Requires [4Fe-4S] cluster as cofactor.

It localises to the cytoplasm. The enzyme catalyses adenosine(2503) in 23S rRNA + 2 reduced [2Fe-2S]-[ferredoxin] + 2 S-adenosyl-L-methionine = 2-methyladenosine(2503) in 23S rRNA + 5'-deoxyadenosine + L-methionine + 2 oxidized [2Fe-2S]-[ferredoxin] + S-adenosyl-L-homocysteine. The catalysed reaction is adenosine(37) in tRNA + 2 reduced [2Fe-2S]-[ferredoxin] + 2 S-adenosyl-L-methionine = 2-methyladenosine(37) in tRNA + 5'-deoxyadenosine + L-methionine + 2 oxidized [2Fe-2S]-[ferredoxin] + S-adenosyl-L-homocysteine. Specifically methylates position 2 of adenine 2503 in 23S rRNA and position 2 of adenine 37 in tRNAs. This chain is Probable dual-specificity RNA methyltransferase RlmN, found in Gloeobacter violaceus (strain ATCC 29082 / PCC 7421).